A 579-amino-acid chain; its full sequence is Potassium-transporting ATPase potassium-binding subunit (579 aa).

10 helical membrane passes run 2–22 (MNLV…AIPL), 66–86 (SFSV…IHIF), 135–155 (GLTV…FALI), 177–197 (VLYI…SQGV), 262–282 (LSNL…CFTF), 292–312 (GIAI…IIGV), 391–411 (VFGG…LAVF), 437–457 (VLVC…ASIL), 490–510 (FAGF…SMLF), and 546–566 (FIGL…FPAL).

This sequence belongs to the KdpA family. In terms of assembly, the system is composed of three essential subunits: KdpA, KdpB and KdpC.

The protein resides in the cell membrane. Its function is as follows. Part of the high-affinity ATP-driven potassium transport (or Kdp) system, which catalyzes the hydrolysis of ATP coupled with the electrogenic transport of potassium into the cytoplasm. This subunit binds the extracellular potassium ions and delivers the ions to the membrane domain of KdpB through an intramembrane tunnel. The protein is Potassium-transporting ATPase potassium-binding subunit of Clostridium botulinum (strain Alaska E43 / Type E3).